The chain runs to 199 residues: Recombination protein RecR (199 aa).

A C4-type zinc finger spans residues 58–73; that stretch reads CKKCFNLTSEEECEIC. The Toprim domain maps to 81-175; the sequence is KIICVVAETK…KVTRIAYGLP (95 aa).

Belongs to the RecR family.

In terms of biological role, may play a role in DNA repair. It seems to be involved in an RecBC-independent recombinational process of DNA repair. It may act with RecF and RecO. The polypeptide is Recombination protein RecR (Prochlorococcus marinus subsp. pastoris (strain CCMP1986 / NIES-2087 / MED4)).